A 691-amino-acid chain; its full sequence is Elongation factor G (691 aa).

Residues 8–283 (EDYRNFGIMA…AVVDFLPSPI (276 aa)) form the tr-type G domain. Residues 17–24 (AHIDAGKT), 81–85 (DTPGH), and 135–138 (NKMD) each bind GTP.

It belongs to the TRAFAC class translation factor GTPase superfamily. Classic translation factor GTPase family. EF-G/EF-2 subfamily.

It localises to the cytoplasm. Functionally, catalyzes the GTP-dependent ribosomal translocation step during translation elongation. During this step, the ribosome changes from the pre-translocational (PRE) to the post-translocational (POST) state as the newly formed A-site-bound peptidyl-tRNA and P-site-bound deacylated tRNA move to the P and E sites, respectively. Catalyzes the coordinated movement of the two tRNA molecules, the mRNA and conformational changes in the ribosome. In Xanthobacter autotrophicus (strain ATCC BAA-1158 / Py2), this protein is Elongation factor G.